Reading from the N-terminus, the 80-residue chain is Putative membrane protein insertion efficiency factor (80 aa).

It belongs to the UPF0161 family.

The protein localises to the cell inner membrane. In terms of biological role, could be involved in insertion of integral membrane proteins into the membrane. The protein is Putative membrane protein insertion efficiency factor of Kosmotoga olearia (strain ATCC BAA-1733 / DSM 21960 / TBF 19.5.1).